Consider the following 257-residue polypeptide: Thiazole synthase (257 aa).

Lys-100 acts as the Schiff-base intermediate with DXP in catalysis. 1-deoxy-D-xylulose 5-phosphate contacts are provided by residues Gly-161, 187 to 188 (AG), and 209 to 210 (NT).

The protein belongs to the ThiG family. As to quaternary structure, homotetramer. Forms heterodimers with either ThiH or ThiS.

Its subcellular location is the cytoplasm. It carries out the reaction [ThiS sulfur-carrier protein]-C-terminal-Gly-aminoethanethioate + 2-iminoacetate + 1-deoxy-D-xylulose 5-phosphate = [ThiS sulfur-carrier protein]-C-terminal Gly-Gly + 2-[(2R,5Z)-2-carboxy-4-methylthiazol-5(2H)-ylidene]ethyl phosphate + 2 H2O + H(+). Its pathway is cofactor biosynthesis; thiamine diphosphate biosynthesis. Its function is as follows. Catalyzes the rearrangement of 1-deoxy-D-xylulose 5-phosphate (DXP) to produce the thiazole phosphate moiety of thiamine. Sulfur is provided by the thiocarboxylate moiety of the carrier protein ThiS. In vitro, sulfur can be provided by H(2)S. The chain is Thiazole synthase from Pelagibacter ubique (strain HTCC1062).